The following is a 359-amino-acid chain: Histidinol-phosphate aminotransferase (359 aa).

K217 carries the post-translational modification N6-(pyridoxal phosphate)lysine.

Belongs to the class-II pyridoxal-phosphate-dependent aminotransferase family. Histidinol-phosphate aminotransferase subfamily. In terms of assembly, homodimer. The cofactor is pyridoxal 5'-phosphate.

It catalyses the reaction L-histidinol phosphate + 2-oxoglutarate = 3-(imidazol-4-yl)-2-oxopropyl phosphate + L-glutamate. It functions in the pathway amino-acid biosynthesis; L-histidine biosynthesis; L-histidine from 5-phospho-alpha-D-ribose 1-diphosphate: step 7/9. The chain is Histidinol-phosphate aminotransferase from Salmonella typhi.